Consider the following 311-residue polypeptide: Putative pyruvate, phosphate dikinase regulatory protein (311 aa).

Position 180–187 (180–187 (GVSRSSKT)) interacts with ADP.

The protein belongs to the pyruvate, phosphate/water dikinase regulatory protein family. PDRP subfamily.

The catalysed reaction is N(tele)-phospho-L-histidyl/L-threonyl-[pyruvate, phosphate dikinase] + ADP = N(tele)-phospho-L-histidyl/O-phospho-L-threonyl-[pyruvate, phosphate dikinase] + AMP + H(+). It carries out the reaction N(tele)-phospho-L-histidyl/O-phospho-L-threonyl-[pyruvate, phosphate dikinase] + phosphate + H(+) = N(tele)-phospho-L-histidyl/L-threonyl-[pyruvate, phosphate dikinase] + diphosphate. Its function is as follows. Bifunctional serine/threonine kinase and phosphorylase involved in the regulation of the pyruvate, phosphate dikinase (PPDK) by catalyzing its phosphorylation/dephosphorylation. This is Putative pyruvate, phosphate dikinase regulatory protein from Paramagnetospirillum magneticum (strain ATCC 700264 / AMB-1) (Magnetospirillum magneticum).